A 688-amino-acid chain; its full sequence is Elongation factor G (688 aa).

Positions 8–282 (KNFRNFGIMA…AVVDFLPSPV (275 aa)) constitute a tr-type G domain. GTP contacts are provided by residues 17–24 (AHIDAGKT), 81–85 (DTPGH), and 135–138 (NKMD).

Belongs to the TRAFAC class translation factor GTPase superfamily. Classic translation factor GTPase family. EF-G/EF-2 subfamily.

It is found in the cytoplasm. Functionally, catalyzes the GTP-dependent ribosomal translocation step during translation elongation. During this step, the ribosome changes from the pre-translocational (PRE) to the post-translocational (POST) state as the newly formed A-site-bound peptidyl-tRNA and P-site-bound deacylated tRNA move to the P and E sites, respectively. Catalyzes the coordinated movement of the two tRNA molecules, the mRNA and conformational changes in the ribosome. This is Elongation factor G (fusA) from Mycoplasma genitalium (strain ATCC 33530 / DSM 19775 / NCTC 10195 / G37) (Mycoplasmoides genitalium).